Consider the following 274-residue polypeptide: Large ribosomal subunit protein uL2 (274 aa).

The interval 224-274 is disordered; it reads VMNPVDHPHGGGEGRSPIGRNPVTPWGKPALGARTRKKKPGDRLIVKRRAR. The segment covering 257 to 274 has biased composition (basic residues); sequence RTRKKKPGDRLIVKRRAR.

The protein belongs to the universal ribosomal protein uL2 family. As to quaternary structure, part of the 50S ribosomal subunit. Forms a bridge to the 30S subunit in the 70S ribosome.

Its function is as follows. One of the primary rRNA binding proteins. Required for association of the 30S and 50S subunits to form the 70S ribosome, for tRNA binding and peptide bond formation. It has been suggested to have peptidyltransferase activity; this is somewhat controversial. Makes several contacts with the 16S rRNA in the 70S ribosome. In Pelotomaculum thermopropionicum (strain DSM 13744 / JCM 10971 / SI), this protein is Large ribosomal subunit protein uL2.